The primary structure comprises 224 residues: UPF0758 protein VS_0182 (224 aa).

A disordered region spans residues 1-21 (MPISKMPVESMPREKLLSRGP). In terms of domain architecture, MPN spans 102–224 (ALTSPSHTKL…VISFAERGWI (123 aa)). Residues histidine 173, histidine 175, and aspartate 186 each contribute to the Zn(2+) site. The JAMM motif signature appears at 173–186 (HNHPSGVAEPSQAD).

It belongs to the UPF0758 family.

The polypeptide is UPF0758 protein VS_0182 (Vibrio atlanticus (strain LGP32) (Vibrio splendidus (strain Mel32))).